The sequence spans 454 residues: Chaperone SurA (454 aa).

Residues 1–28 (MKISSFRKGRWLGALALFAVVCWSMADA) form the signal peptide. 2 consecutive PpiC domains span residues 177 to 278 (DREY…KMLA) and 287 to 386 (LTKT…QVLE). The disordered stretch occupies residues 431-454 (LDETPASPGEDAPAGEDSPETFMR). Acidic residues predominate over residues 443-454 (PAGEDSPETFMR).

It localises to the periplasm. The enzyme catalyses [protein]-peptidylproline (omega=180) = [protein]-peptidylproline (omega=0). Its function is as follows. Chaperone involved in the correct folding and assembly of outer membrane proteins. Recognizes specific patterns of aromatic residues and the orientation of their side chains, which are found more frequently in integral outer membrane proteins. May act in both early periplasmic and late outer membrane-associated steps of protein maturation. In Methylococcus capsulatus (strain ATCC 33009 / NCIMB 11132 / Bath), this protein is Chaperone SurA.